Here is a 348-residue protein sequence, read N- to C-terminus: MSEKMVAIMKTKPAYGAELVEVDVPKPGPGEVLIKVIATSICGTDLHIYEWNEWAQSRIKPPQIMGHEVAGEVVEVGPGVEGIEVGDYVSVETHIVCGKCYACRRGQYHVCQNTKIFGVDTDGVFAEYAVVPAQNVWKNPKSIPPEYATLQEPLGNAVDTVLAGPISGKSVLITGAGPLGLLGIAVAKASGAYPVIVSEPSDFRRELAKKVGADYVINPFEEDVVKEVMDITDGNGVDVFLEFSGAPKALEQGLQAVTPAGRVSLLGLYPGKVSIDFNNLIIFKALTVYGITGRHLWETWYTVSRLLQSGKLNLDPIITHKYKGFDKYEEAFELMRAGKTGKVVFMLK.

Zn(2+) is bound at residue Cys42. Catalysis depends on charge relay system residues Thr44 and His47. His67, Glu68, Cys97, Cys100, Cys103, and Cys111 together coordinate Zn(2+). Residues Leu179, Glu199, Arg204, 266–268 (LGL), and 291–292 (IT) each bind NAD(+).

It belongs to the zinc-containing alcohol dehydrogenase family. Homotetramer. Zn(2+) serves as cofactor.

Its subcellular location is the cytoplasm. The catalysed reaction is L-threonine + NAD(+) = (2S)-2-amino-3-oxobutanoate + NADH + H(+). The protein operates within amino-acid degradation; L-threonine degradation via oxydo-reductase pathway; glycine from L-threonine: step 1/2. Its function is as follows. Catalyzes the NAD(+)-dependent oxidation of L-threonine to 2-amino-3-ketobutyrate. The chain is L-threonine 3-dehydrogenase from Pyrococcus abyssi (strain GE5 / Orsay).